We begin with the raw amino-acid sequence, 418 residues long: Secreted aspartic protease 6 (418 aa).

Residues 1-18 (MFLKNILSVLRFALLIDA) form the signal peptide. The propeptide at 19–76 (APVKRSPGFVTLDFNVKRSLVVPDDPTAESKRSPLFLDLDPTQIPVDDTGRNVGVDKR) is activation peptide. Residues 90-404 (YSADITVGSN…DLDDKKISMA (315 aa)) form the Peptidase A1 domain. The active site involves Asp108. 108 to 110 (DTG) is a binding site for pepstatin A. A disulfide bond links Cys123 and Cys135. A glycan (N-linked (GlcNAc...) asparagine) is linked at Asn138. Residue Asp268 participates in Zn(2+) binding. Asp294 is an active-site residue. Residue 294–298 (DSGTT) coordinates pepstatin A. Cys332 and Cys370 are disulfide-bonded.

This sequence belongs to the peptidase A1 family.

Its subcellular location is the secreted. The enzyme catalyses Preferential cleavage at the carboxyl of hydrophobic amino acids, but fails to cleave 15-Leu-|-Tyr-16, 16-Tyr-|-Leu-17 and 24-Phe-|-Phe-25 of insulin B chain. Activates trypsinogen, and degrades keratin.. Inhibited by pepstatin A analogs. Functionally, secreted aspartic peptidases (SAPs) are a group of ten acidic hydrolases considered as key virulence factors. These enzymes supply the fungus with nutrient amino acids as well as are able to degrade the selected host's proteins involved in the immune defense. Moreover, acts toward human hemoglobin though limited proteolysis to generate a variety of antimicrobial hemocidins, enabling to compete with the other microorganisms of the same physiological niche using the microbicidal peptides generated from the host protein. The protein is Secreted aspartic protease 6 of Candida albicans (Yeast).